Reading from the N-terminus, the 388-residue chain is Protein RecA (388 aa).

ATP is bound at residue 79-86 (GPESSGKT). The segment at 347 to 372 (IDGEEVSEQDTENKKDEPKKEEAVNE) is disordered. Residues 357–369 (TENKKDEPKKEEA) show a composition bias toward basic and acidic residues.

The protein belongs to the RecA family.

The protein resides in the cytoplasm. Its function is as follows. Can catalyze the hydrolysis of ATP in the presence of single-stranded DNA, the ATP-dependent uptake of single-stranded DNA by duplex DNA, and the ATP-dependent hybridization of homologous single-stranded DNAs. It interacts with LexA causing its activation and leading to its autocatalytic cleavage. The chain is Protein RecA from Streptococcus pneumoniae (strain CGSP14).